Here is a 657-residue protein sequence, read N- to C-terminus: Acetyl-coenzyme A synthetase (657 aa).

CoA-binding positions include 192 to 195 and Thr311; that span reads RRGK. ATP contacts are provided by residues 387-389, 411-416, Asp504, Arg519, and Arg530; these read GEP and DTWWQT. His543 and Val546 together coordinate Mg(2+). Residue Arg592 participates in CoA binding. Position 617 is an N6-acetyllysine (Lys617).

This sequence belongs to the ATP-dependent AMP-binding enzyme family. Mg(2+) is required as a cofactor. In terms of processing, acetylated. Deacetylation by the SIR2-homolog deacetylase activates the enzyme.

It catalyses the reaction acetate + ATP + CoA = acetyl-CoA + AMP + diphosphate. Functionally, catalyzes the conversion of acetate into acetyl-CoA (AcCoA), an essential intermediate at the junction of anabolic and catabolic pathways. AcsA undergoes a two-step reaction. In the first half reaction, AcsA combines acetate with ATP to form acetyl-adenylate (AcAMP) intermediate. In the second half reaction, it can then transfer the acetyl group from AcAMP to the sulfhydryl group of CoA, forming the product AcCoA. The sequence is that of Acetyl-coenzyme A synthetase from Campylobacter jejuni subsp. jejuni serotype O:6 (strain 81116 / NCTC 11828).